The chain runs to 212 residues: Adenylate kinase (212 aa).

An ATP-binding site is contributed by 10-15 (GAGKGT). Positions 30-59 (AIGDIFRTIIKTSTSEAELINNYVKQGELI) are NMP. AMP is bound by residues arginine 36, 57–59 (ELI), 85–88 (GYPR), and glutamine 92. An LID region spans residues 122-160 (GRYSCKNCGKIYNRYFLQPKTDNVCDVCGSSTFDYRKDD). Arginine 123 contributes to the ATP binding site. Cysteine 126 and cysteine 129 together coordinate Zn(2+). An ATP-binding site is contributed by 132–133 (IY). Positions 146 and 149 each coordinate Zn(2+). AMP-binding residues include arginine 157 and arginine 168. Lysine 196 serves as a coordination point for ATP.

This sequence belongs to the adenylate kinase family. Monomer.

The protein localises to the cytoplasm. It catalyses the reaction AMP + ATP = 2 ADP. Its pathway is purine metabolism; AMP biosynthesis via salvage pathway; AMP from ADP: step 1/1. In terms of biological role, catalyzes the reversible transfer of the terminal phosphate group between ATP and AMP. Plays an important role in cellular energy homeostasis and in adenine nucleotide metabolism. In Rickettsia africae (strain ESF-5), this protein is Adenylate kinase.